The sequence spans 85 residues: Small ribosomal subunit protein bS16c (85 aa).

The protein belongs to the bacterial ribosomal protein bS16 family.

The protein resides in the plastid. It is found in the chloroplast. The protein is Small ribosomal subunit protein bS16c of Cucumis sativus (Cucumber).